Consider the following 974-residue polypeptide: Bifunctional glutamine synthetase adenylyltransferase/adenylyl-removing enzyme (974 aa).

Residues 1–464 (MKNAFLKTHL…HYAALFENEQ (464 aa)) are adenylyl removase. Residues 468–974 (LEIGNLVFTG…CSIFKQIMKH (507 aa)) form an adenylyl transferase region.

This sequence belongs to the GlnE family. It depends on Mg(2+) as a cofactor.

It catalyses the reaction [glutamine synthetase]-O(4)-(5'-adenylyl)-L-tyrosine + phosphate = [glutamine synthetase]-L-tyrosine + ADP. The enzyme catalyses [glutamine synthetase]-L-tyrosine + ATP = [glutamine synthetase]-O(4)-(5'-adenylyl)-L-tyrosine + diphosphate. Functionally, involved in the regulation of glutamine synthetase GlnA, a key enzyme in the process to assimilate ammonia. When cellular nitrogen levels are high, the C-terminal adenylyl transferase (AT) inactivates GlnA by covalent transfer of an adenylyl group from ATP to specific tyrosine residue of GlnA, thus reducing its activity. Conversely, when nitrogen levels are low, the N-terminal adenylyl removase (AR) activates GlnA by removing the adenylyl group by phosphorolysis, increasing its activity. The regulatory region of GlnE binds the signal transduction protein PII (GlnB) which indicates the nitrogen status of the cell. The chain is Bifunctional glutamine synthetase adenylyltransferase/adenylyl-removing enzyme from Bartonella quintana (strain Toulouse) (Rochalimaea quintana).